The sequence spans 389 residues: Tryptophan 2,3-dioxygenase (389 aa).

Residues 60–64 and arginine 131 each bind substrate; that span reads FIITH. Residue histidine 316 coordinates heme. Threonine 331 provides a ligand contact to substrate.

It belongs to the tryptophan 2,3-dioxygenase family. In terms of assembly, homotetramer. Dimer of dimers. Heme serves as cofactor.

The enzyme catalyses L-tryptophan + O2 = N-formyl-L-kynurenine. The protein operates within amino-acid degradation; L-tryptophan degradation via kynurenine pathway; L-kynurenine from L-tryptophan: step 1/2. It functions in the pathway pigment biosynthesis; ommochrome biosynthesis. Heme-dependent dioxygenase that catalyzes the oxidative cleavage of the L-tryptophan (L-Trp) pyrrole ring and converts L-tryptophan to N-formyl-L-kynurenine. Catalyzes the oxidative cleavage of the indole moiety. The protein is Tryptophan 2,3-dioxygenase of Mayetiola destructor (Hessian fly).